A 675-amino-acid polypeptide reads, in one-letter code: DNA gyrase subunit B (675 aa).

The region spanning 453–567 is the Toprim domain; it reads SELYVVEGDS…NGHVFLAQPP (115 aa). Mg(2+) is bound by residues Glu459, Asp532, and Asp534.

Belongs to the type II topoisomerase GyrB family. As to quaternary structure, heterotetramer, composed of two GyrA and two GyrB chains. In the heterotetramer, GyrA contains the active site tyrosine that forms a transient covalent intermediate with DNA, while GyrB binds cofactors and catalyzes ATP hydrolysis. Requires Mg(2+) as cofactor. The cofactor is Mn(2+). Ca(2+) serves as cofactor.

The protein resides in the cytoplasm. It carries out the reaction ATP-dependent breakage, passage and rejoining of double-stranded DNA.. Its function is as follows. A type II topoisomerase that negatively supercoils closed circular double-stranded (ds) DNA in an ATP-dependent manner to modulate DNA topology and maintain chromosomes in an underwound state. Negative supercoiling favors strand separation, and DNA replication, transcription, recombination and repair, all of which involve strand separation. Also able to catalyze the interconversion of other topological isomers of dsDNA rings, including catenanes and knotted rings. Type II topoisomerases break and join 2 DNA strands simultaneously in an ATP-dependent manner. This is DNA gyrase subunit B from Mycobacterium tuberculosis (strain ATCC 25177 / H37Ra).